The sequence spans 145 residues: MIALIQRVSRASVVVDNQTLGSIDKGLLVLLGVEREDNREKMEKLATKVMSYRVFSDENGKMNLNLEQVGGSLLVVSQFTLAADTGRGLRPSFSGAGTPDQALTLYEEFVAFCRDKGVTTETGQFGADMQVSLVNDGPVTFNLQV.

The Gly-cisPro motif, important for rejection of L-amino acids signature appears at 137–138 (GP).

It belongs to the DTD family. In terms of assembly, homodimer.

The protein resides in the cytoplasm. The catalysed reaction is glycyl-tRNA(Ala) + H2O = tRNA(Ala) + glycine + H(+). It catalyses the reaction a D-aminoacyl-tRNA + H2O = a tRNA + a D-alpha-amino acid + H(+). In terms of biological role, an aminoacyl-tRNA editing enzyme that deacylates mischarged D-aminoacyl-tRNAs. Also deacylates mischarged glycyl-tRNA(Ala), protecting cells against glycine mischarging by AlaRS. Acts via tRNA-based rather than protein-based catalysis; rejects L-amino acids rather than detecting D-amino acids in the active site. By recycling D-aminoacyl-tRNA to D-amino acids and free tRNA molecules, this enzyme counteracts the toxicity associated with the formation of D-aminoacyl-tRNA entities in vivo and helps enforce protein L-homochirality. The chain is D-aminoacyl-tRNA deacylase from Shewanella putrefaciens (strain CN-32 / ATCC BAA-453).